Reading from the N-terminus, the 138-residue chain is ATP synthase epsilon chain (138 aa).

This sequence belongs to the ATPase epsilon chain family. As to quaternary structure, F-type ATPases have 2 components, CF(1) - the catalytic core - and CF(0) - the membrane proton channel. CF(1) has five subunits: alpha(3), beta(3), gamma(1), delta(1), epsilon(1). CF(0) has three main subunits: a, b and c.

Its subcellular location is the cell membrane. Its function is as follows. Produces ATP from ADP in the presence of a proton gradient across the membrane. The sequence is that of ATP synthase epsilon chain from Streptococcus uberis (strain ATCC BAA-854 / 0140J).